Reading from the N-terminus, the 586-residue chain is Putative ABC transporter ATP-binding protein MG187 homolog (586 aa).

The ABC transporter domain maps to 13-464 (IEFKNIVVDF…PANEFVATFL (452 aa)). 45–52 (GPSGCGKT) serves as a coordination point for ATP.

The protein belongs to the ABC transporter superfamily.

The polypeptide is Putative ABC transporter ATP-binding protein MG187 homolog (Mycoplasma pneumoniae (strain ATCC 29342 / M129 / Subtype 1) (Mycoplasmoides pneumoniae)).